Consider the following 620-residue polypeptide: Glutathione-regulated potassium-efflux system protein KefC (620 aa).

Transmembrane regions (helical) follow at residues 4–24 (HTLIQALIYLGSAALIVPIAV), 26–46 (LGLGSVLGYLIAGCIIGPWGL), 54–74 (SILHFAEIGVVLMLFIIGLEL), 90–110 (GALQMVICGGLLGLFCMFLGL), 114–134 (VAELIGMTLALSSTAIAMQAM), 149–169 (FAVLLFQDIAAIPLVAMIPLL), 178–198 (MGAFALSALKVAGALVLVVLL), 218–238 (VFSAVALFLVFGFGLLLEEVG), 270–290 (GLLLGLFFIGVGMSIDFGTLL), 294–314 (LRIVILLLGFLIIKIAMLWLI), 327–347 (WFAVLLGQGSEFAFVVFGAAQ), and 359–379 (SLTLAVALSMAATPILLVILN). The region spanning 399-518 (QPRVIIAGFG…AGVEKPERET (120 aa)) is the RCK N-terminal domain. The interval 597–620 (GWQGTEEGKHTGNMADEPETKPSS) is disordered.

Belongs to the monovalent cation:proton antiporter 2 (CPA2) transporter (TC 2.A.37) family. KefC subfamily. As to quaternary structure, homodimer. Interacts with the regulatory subunit KefF.

Its subcellular location is the cell inner membrane. Functionally, pore-forming subunit of a potassium efflux system that confers protection against electrophiles. Catalyzes K(+)/H(+) antiport. This Escherichia fergusonii (strain ATCC 35469 / DSM 13698 / CCUG 18766 / IAM 14443 / JCM 21226 / LMG 7866 / NBRC 102419 / NCTC 12128 / CDC 0568-73) protein is Glutathione-regulated potassium-efflux system protein KefC.